The following is a 391-amino-acid chain: Argininosuccinate synthase (391 aa).

6 to 14 (AYSGGLDTT) contacts ATP. Tyr-84 is an L-citrulline binding site. Gly-114 serves as a coordination point for ATP. L-aspartate contacts are provided by Thr-116, Asn-120, and Asp-121. An L-citrulline-binding site is contributed by Asn-120. Arg-124, Ser-171, Ser-180, Glu-253, and Tyr-265 together coordinate L-citrulline.

This sequence belongs to the argininosuccinate synthase family. Type 1 subfamily. As to quaternary structure, homotetramer.

Its subcellular location is the cytoplasm. It carries out the reaction L-citrulline + L-aspartate + ATP = 2-(N(omega)-L-arginino)succinate + AMP + diphosphate + H(+). Its pathway is amino-acid biosynthesis; L-arginine biosynthesis; L-arginine from L-ornithine and carbamoyl phosphate: step 2/3. This is Argininosuccinate synthase from Metallosphaera sedula (strain ATCC 51363 / DSM 5348 / JCM 9185 / NBRC 15509 / TH2).